Consider the following 284-residue polypeptide: Bifunctional protein FolD (284 aa).

NADP(+)-binding positions include 165–167 (GRS) and S190.

This sequence belongs to the tetrahydrofolate dehydrogenase/cyclohydrolase family. As to quaternary structure, homodimer.

The catalysed reaction is (6R)-5,10-methylene-5,6,7,8-tetrahydrofolate + NADP(+) = (6R)-5,10-methenyltetrahydrofolate + NADPH. It catalyses the reaction (6R)-5,10-methenyltetrahydrofolate + H2O = (6R)-10-formyltetrahydrofolate + H(+). It functions in the pathway one-carbon metabolism; tetrahydrofolate interconversion. Functionally, catalyzes the oxidation of 5,10-methylenetetrahydrofolate to 5,10-methenyltetrahydrofolate and then the hydrolysis of 5,10-methenyltetrahydrofolate to 10-formyltetrahydrofolate. This chain is Bifunctional protein FolD, found in Streptococcus gordonii (strain Challis / ATCC 35105 / BCRC 15272 / CH1 / DL1 / V288).